Reading from the N-terminus, the 544-residue chain is Methionine--tRNA ligase 2 (544 aa).

Residues 10 to 20 carry the 'HIGH' region motif; the sequence is PYANGSLHLGH. Residues cysteine 141, cysteine 144, cysteine 153, and cysteine 156 each coordinate Zn(2+). The 'KMSKS' region motif lies at 329-333; that stretch reads KLSTS. Threonine 332 lines the ATP pocket.

The protein belongs to the class-I aminoacyl-tRNA synthetase family. MetG type 1 subfamily. Monomer. Requires Zn(2+) as cofactor.

It is found in the cytoplasm. The enzyme catalyses tRNA(Met) + L-methionine + ATP = L-methionyl-tRNA(Met) + AMP + diphosphate. Functionally, is required not only for elongation of protein synthesis but also for the initiation of all mRNA translation through initiator tRNA(fMet) aminoacylation. This is Methionine--tRNA ligase 2 from Bacillus anthracis.